Reading from the N-terminus, the 373-residue chain is Glutamine synthetase (373 aa).

A2 carries the post-translational modification N-acetylalanine. The segment at 2–25 is required for glutamine-induced ubiquitination by CRL4(CRBN) and proteasomal degradation; that stretch reads ATSASSHLNKGIKQMYMNLPQGEK. K11 and K14 each carry N6-acetyllysine. Residues 24–106 form the GS beta-grasp domain; the sequence is EKIQLMYIWV…VFCEVFKYNR (83 aa). Y104 carries the post-translational modification Phosphotyrosine. A GS catalytic domain is found at 113–373; that stretch reads LRHSCKRIMD…TGDEPFQYKN (261 aa). E134 is a binding site for ATP. E134, E136, E196, and E203 together coordinate Mn(2+). 203–208 is an ATP binding site; that stretch reads EFQIGP. 246-247 provides a ligand contact to L-glutamate; it reads NW. Mn(2+) is bound at residue H253. ATP-binding positions include 255–257, R319, and R324; that span reads NFS. R319 is a binding site for L-glutamate. Residue 336–338 coordinates ADP; sequence YFE. E338 is a binding site for Mn(2+). Residue R340 coordinates L-glutamate. S343 is modified (phosphoserine).

This sequence belongs to the glutamine synthetase family. As to quaternary structure, decamer; composed of two pentamers. Interacts with PALMD. Interacts with RHOJ. Interacts with BEST2; this interaction tethers a fraction of GLUL to the membrane, causing a decrease of cytosolic glutamine synthase (GS) activity and inhibits the chloride channel activity of BEST2 by affecting the gating at the aperture in the absence of intracellular glutamate. Mg(2+) serves as cofactor. Mn(2+) is required as a cofactor. Post-translationally, palmitoylated; undergoes autopalmitoylation. Acetylated by EP300/p300; acetylation is stimulated by increased glutamine levels and promotes ubiquitin-mediated proteasomal degradation. In terms of processing, ubiquitinated by ZNRF1. Ubiquitinated by the DCX (DDB1-CUL4-X-box) E3 ubiquitin-protein ligase complex called CRL4(CRBN), leading to proteasomal degradation. As to expression, in the adult liver, expression is restricted to a small population of hepatocytes which form only a small rim of one to three hepatocytes around the central veins. Expressed in lung microvascular endothelial cells.

It localises to the cytoplasm. It is found in the cytosol. The protein localises to the microsome. Its subcellular location is the mitochondrion. The protein resides in the cell membrane. It carries out the reaction L-glutamate + NH4(+) + ATP = L-glutamine + ADP + phosphate + H(+). The catalysed reaction is L-cysteinyl-[protein] + hexadecanoyl-CoA = S-hexadecanoyl-L-cysteinyl-[protein] + CoA. Its activity is regulated as follows. Glutamine synthetase activity is inhibited by methionine sulfoximine (MSO). Functionally, glutamine synthetase that catalyzes the ATP-dependent conversion of glutamate and ammonia to glutamine. Its role depends on tissue localization: in the brain, it regulates the levels of toxic ammonia and converts neurotoxic glutamate to harmless glutamine, whereas in the liver, it is one of the enzymes responsible for the removal of ammonia. Plays a key role in ammonium detoxification during erythropoiesis: the glutamine synthetase activity is required to remove ammonium generated by porphobilinogen deaminase (HMBS) during heme biosynthesis to prevent ammonium accumulation and oxidative stress. Essential for proliferation of fetal skin fibroblasts. Independently of its glutamine synthetase activity, required for endothelial cell migration during vascular development. Involved in angiogenesis by regulating membrane localization and activation of the GTPase RHOJ, possibly by promoting RHOJ palmitoylation. May act as a palmitoyltransferase for RHOJ: able to autopalmitoylate and then transfer the palmitoyl group to RHOJ. Plays a role in ribosomal 40S subunit biogenesis. Through the interaction with BEST2, inhibits BEST2 channel activity by affecting the gating at the aperture in the absence of intracellular L-glutamate, but sensitizes BEST2 to intracellular L-glutamate, which promotes the opening of BEST2 and thus relieves its inhibitory effect on BEST2. The chain is Glutamine synthetase from Rattus norvegicus (Rat).